The chain runs to 563 residues: DNA repair protein rhp7 (563 aa).

The interval 1-101 (MSSGSRVRGP…TDEEAEDNED (101 aa)) is disordered. Polar residues predominate over residues 39–59 (ESAGQSTGTESEVIQTPTSVE). Over residues 78–90 (VKRRNLRNQKKKK) the composition is skewed to basic residues.

Belongs to the RAD7 family.

It localises to the nucleus. In terms of biological role, involved in global genome repair (GGR) via nucleotide excision repair (NER), in conjunction with rhp16, after UV irradiation. The sequence is that of DNA repair protein rhp7 (rhp7) from Schizosaccharomyces pombe (strain 972 / ATCC 24843) (Fission yeast).